Consider the following 274-residue polypeptide: Photosystem II extrinsic protein O (274 aa).

Positions 1–28 (MRFRPSIVALLSVCFGLLTFLYSGSAFA) are cleaved as a signal peptide.

This sequence belongs to the PsbO family. In terms of assembly, PSII is composed of 1 copy each of membrane proteins PsbA, PsbB, PsbC, PsbD, PsbE, PsbF, PsbH, PsbI, PsbJ, PsbK, PsbL, PsbM, PsbT, PsbX, PsbY, PsbZ, Psb30/Ycf12, peripheral proteins PsbO, CyanoQ (PsbQ), PsbU, PsbV and a large number of cofactors. It forms dimeric complexes. Contacts PsbQ.

Its subcellular location is the cellular thylakoid membrane. Its function is as follows. One of the extrinsic, lumenal subunits of photosystem II (PSII), which stabilize and protect the oxygen-evolving complex. PSII is a light-driven water plastoquinone oxidoreductase, using light energy to abstract electrons from H(2)O, generating a proton gradient subsequently used for ATP formation. Required for dimerization of PSII and for binding of PsbQ to PSII. This is Photosystem II extrinsic protein O from Synechocystis sp. (strain ATCC 27184 / PCC 6803 / Kazusa).